The sequence spans 201 residues: Putative pseudouridine methyltransferase (201 aa).

S-adenosyl-L-methionine is bound by residues methionine 132 and cysteine 186.

This sequence belongs to the methyltransferase superfamily. TrmY family.

Its subcellular location is the cytoplasm. In Vibrio cholerae serotype O1 (strain ATCC 39315 / El Tor Inaba N16961), this protein is Putative pseudouridine methyltransferase.